We begin with the raw amino-acid sequence, 71 residues long: ATP synthase F(0) complex subunit e, mitochondrial (71 aa).

An N6-acetyllysine modification is found at lysine 34.

It belongs to the ATPase e subunit family. In terms of assembly, component of the ATP synthase complex composed at least of ATP5F1A/subunit alpha, ATP5F1B/subunit beta, ATP5MC1/subunit c (homooctomer), MT-ATP6/subunit a, MT-ATP8/subunit 8, ATP5ME/subunit e, ATP5MF/subunit f, ATP5MG/subunit g, ATP5MK/subunit k, ATP5MJ/subunit j, ATP5F1C/subunit gamma, ATP5F1D/subunit delta, ATP5F1E/subunit epsilon, ATP5PF/subunit F6, ATP5PB/subunit b, ATP5PD/subunit d, ATP5PO/subunit OSCP. ATP synthase complex consists of a soluble F(1) head domain (subunits alpha(3) and beta(3)) - the catalytic core - and a membrane F(0) domain - the membrane proton channel (subunits c, a, 8, e, f, g, k and j). These two domains are linked by a central stalk (subunits gamma, delta, and epsilon) rotating inside the F1 region and a stationary peripheral stalk (subunits F6, b, d, and OSCP).

The protein localises to the mitochondrion. The protein resides in the mitochondrion inner membrane. Subunit e, of the mitochondrial membrane ATP synthase complex (F(1)F(0) ATP synthase or Complex V) that produces ATP from ADP in the presence of a proton gradient across the membrane which is generated by electron transport complexes of the respiratory chain. ATP synthase complex consist of a soluble F(1) head domain - the catalytic core - and a membrane F(1) domain - the membrane proton channel. These two domains are linked by a central stalk rotating inside the F(1) region and a stationary peripheral stalk. During catalysis, ATP synthesis in the catalytic domain of F(1) is coupled via a rotary mechanism of the central stalk subunits to proton translocation. In vivo, can only synthesize ATP although its ATP hydrolase activity can be activated artificially in vitro. Part of the complex F(0) domain. The sequence is that of ATP synthase F(0) complex subunit e, mitochondrial from Bos taurus (Bovine).